The chain runs to 465 residues: UDP-N-acetylmuramate--L-alanine ligase (465 aa).

Position 115–121 (115–121) interacts with ATP; sequence GAHGKTT.

This sequence belongs to the MurCDEF family.

It is found in the cytoplasm. It carries out the reaction UDP-N-acetyl-alpha-D-muramate + L-alanine + ATP = UDP-N-acetyl-alpha-D-muramoyl-L-alanine + ADP + phosphate + H(+). It functions in the pathway cell wall biogenesis; peptidoglycan biosynthesis. Its function is as follows. Cell wall formation. This chain is UDP-N-acetylmuramate--L-alanine ligase, found in Coxiella burnetii (strain Dugway 5J108-111).